The chain runs to 591 residues: V-type ATP synthase alpha chain (591 aa).

ATP is bound at residue 233–240 (GPFGAGKT).

It belongs to the ATPase alpha/beta chains family.

It catalyses the reaction ATP + H2O + 4 H(+)(in) = ADP + phosphate + 5 H(+)(out). In terms of biological role, produces ATP from ADP in the presence of a proton gradient across the membrane. The V-type alpha chain is a catalytic subunit. This is V-type ATP synthase alpha chain from Streptococcus pyogenes serotype M12 (strain MGAS2096).